The primary structure comprises 230 residues: UPF0173 metal-dependent hydrolase Dshi_2788 (230 aa).

The protein belongs to the UPF0173 family.

This Dinoroseobacter shibae (strain DSM 16493 / NCIMB 14021 / DFL 12) protein is UPF0173 metal-dependent hydrolase Dshi_2788.